Consider the following 240-residue polypeptide: Expansin-A20 (240 aa).

An N-terminal signal peptide occupies residues 1–21 (MGNILLQLLAVVALCIAPARS). Residues 41–145 (GGACGYGNLY…QQVKCWRYGG (105 aa)) form the Expansin-like EG45 domain. 2 N-linked (GlcNAc...) asparagine glycosylation sites follow: N107 and N207. The Expansin-like CBD domain maps to 155-234 (YFELVLVTNM…GWSFGQTFST (80 aa)).

Belongs to the expansin family. Expansin A subfamily.

It localises to the secreted. Its subcellular location is the cell wall. It is found in the membrane. May cause loosening and extension of plant cell walls by disrupting non-covalent bonding between cellulose microfibrils and matrix glucans. No enzymatic activity has been found. May be required for rapid internodal elongation in deepwater rice during submergence. The protein is Expansin-A20 (EXPA20) of Oryza sativa subsp. japonica (Rice).